Consider the following 288-residue polypeptide: MSNLKQLRTRIKSVKSTQKITKAMQLVSASKLTKIKNQIAHSNFYVEAISKMMSTVLSADIYDFPIEAQKFFNTETNKANLLIVMTSERGLCGTFNYMIIKQVKSDVETLKSKGEKIKLIIIGKKGYEALKKPYESYIDSYFELPKNHDENLMLQIKQKIMALVANLEVSNCTIYFNRFKNAMTQSMTKQQILPIEKYHDDSKIEEANYEYEGENLIQNLINLYVNSQINYALLQNRASEEGSRMTAMENATNNAHDIINKLVLKLNRSRQAIITTELIEIIAGSEAV.

Belongs to the ATPase gamma chain family. As to quaternary structure, F-type ATPases have 2 components, CF(1) - the catalytic core - and CF(0) - the membrane proton channel. CF(1) has five subunits: alpha(3), beta(3), gamma(1), delta(1), epsilon(1). CF(0) has three main subunits: a, b and c.

It localises to the cell inner membrane. Its function is as follows. Produces ATP from ADP in the presence of a proton gradient across the membrane. The gamma chain is believed to be important in regulating ATPase activity and the flow of protons through the CF(0) complex. The polypeptide is ATP synthase gamma chain (Rickettsia bellii (strain RML369-C)).